Consider the following 132-residue polypeptide: MSSFLGKWKLSETHNFDAVMSKLGVSWPIRQMGNTVTPTVTFTMDGDTMTMLTESTFKNLSVTFKFGEEFDEKTSDGRNVKSVVTKDSESKITQTQKDAKNTTVIVREIVGDTMKTTVTVDDVTAIRNYKRL.

(5Z,8Z,11Z,14Z)-eicosatetraenoate contacts are provided by residues Arg107 and 127–129 (RNY). (9Z)-octadecenoate contacts are provided by residues Arg107 and 127–129 (RNY).

This sequence belongs to the calycin superfamily. Fatty-acid binding protein (FABP) family.

The protein localises to the cytoplasm. In terms of biological role, may play a role in the transport of fatty acids. Binds to various fatty acids but not retinoids. This is Fatty acid-binding protein from Schistosoma japonicum (Blood fluke).